The following is a 387-amino-acid chain: MTKSIKRPPPFSCKQVLLTYVILAYTVAAHSSPPPCGLYGAPPCQFLPAPPGQTPTCARPGKTYCEHADNYPTYLIKSLVRKWGYEAATLLVDETWEDFAAVAWHDTPVFYDPKSIFPPRDPAAQDFNGYSYQTPFGGNPQRPSGGGNPLFVSNPSTEAPTYLLYTSSGGGHRSGHRYNSQGGGTSSSGGHLYINQSDKSTPYNATLWLKRLVRDLSRKQRQPDEVQAEVVEPVNEQTEEAEEQDNPAEDHPQSKRDVSLNMDLLDIVGVEAPNPLKKRSRTKRQSPGRSTLCQTTSQFITPQAALNSRGNWMFVVNEQNTARQMVKAELCASNTCSNLCELPNGYNSRCEQKFVQKRLIALQGNGQNLYTDTFWFPSCCVCTIAAN.

A signal peptide spans Met-1 to Ala-29. A propeptide spanning residues His-30–Arg-284 is cleaved from the precursor. The tract at residues Gln-133–Ser-197 is disordered. Residues Asn-195 and Asn-204 are each glycosylated (N-linked (GlcNAc...) asparagine). Disordered regions lie at residues Lys-219–Arg-256 and Gly-269–Thr-291. Residues Gln-237–Pro-247 are compositionally biased toward acidic residues. A compositionally biased stretch (basic residues) spans Leu-276–Ser-286. The Spaetzle domain maps to Thr-291 to Ile-384. Cystine bridges form between Cys-293–Cys-350, Cys-331–Cys-380, and Cys-340–Cys-382.

Homodimer; disulfide-linked. As to expression, detected in the fan-shaped body which is a component of the locomotion center in the central nervous system (CNS) (at protein level).

In terms of biological role, neurotrophin which may function as a ligand for the Toll-related receptors Toll-6 and Toll-7. Binds to Toll-7 and Toll-6, and probably acts as their ligands in the promotion of motor axon targeting and neuronal survival in the central nervous system (CNS). Involved in synaptic targeting of ISNb/d motorneurons and also some SNa motorneurons. May be involved in the normal development of specific neurons at the neuromuscular junction. The sequence is that of Protein spaetzle 5 from Drosophila melanogaster (Fruit fly).